The primary structure comprises 463 residues: Soluble pyridine nucleotide transhydrogenase (463 aa).

Residue 35 to 44 (EKQQAVGGNC) participates in FAD binding.

The protein belongs to the class-I pyridine nucleotide-disulfide oxidoreductase family. It depends on FAD as a cofactor.

It is found in the cytoplasm. The enzyme catalyses NAD(+) + NADPH = NADH + NADP(+). Functionally, conversion of NADPH, generated by peripheral catabolic pathways, to NADH, which can enter the respiratory chain for energy generation. The chain is Soluble pyridine nucleotide transhydrogenase from Chromohalobacter salexigens (strain ATCC BAA-138 / DSM 3043 / CIP 106854 / NCIMB 13768 / 1H11).